Consider the following 236-residue polypeptide: Thylakoid lumenal 17.4 kDa protein, chloroplastic (236 aa).

2 consecutive Pentapeptide repeat domains span residues threonine 124–glycine 163 and alanine 169–aspartate 208.

Interacts in vitro with LTO1.

It is found in the plastid. The protein resides in the chloroplast thylakoid lumen. The chain is Thylakoid lumenal 17.4 kDa protein, chloroplastic from Arabidopsis thaliana (Mouse-ear cress).